Here is a 445-residue protein sequence, read N- to C-terminus: Tubulin beta-1 chain (445 aa).

Residues 1–4 (MREI) carry the MREI motif motif. GTP is bound by residues Q11, E69, S138, G142, T143, G144, N204, and N226. E69 provides a ligand contact to Mg(2+). The tract at residues 425–445 (YQDATAEEEGEFEEEGEEELA) is disordered. Positions 429 to 445 (TAEEEGEFEEEGEEELA) are enriched in acidic residues. The residue at position 438 (E438) is a 5-glutamyl polyglutamate.

This sequence belongs to the tubulin family. As to quaternary structure, dimer of alpha and beta chains. A typical microtubule is a hollow water-filled tube with an outer diameter of 25 nm and an inner diameter of 15 nM. Alpha-beta heterodimers associate head-to-tail to form protofilaments running lengthwise along the microtubule wall with the beta-tubulin subunit facing the microtubule plus end conferring a structural polarity. Microtubules usually have 13 protofilaments but different protofilament numbers can be found in some organisms and specialized cells. Mg(2+) is required as a cofactor. Some glutamate residues at the C-terminus are polyglycylated, resulting in polyglycine chains on the gamma-carboxyl group. Glycylation is mainly limited to tubulin incorporated into axonemes (cilia and flagella) whereas glutamylation is prevalent in neuronal cells, centrioles, axonemes, and the mitotic spindle. Both modifications can coexist on the same protein on adjacent residues, and lowering polyglycylation levels increases polyglutamylation, and reciprocally. The precise function of polyglycylation is still unclear. In terms of processing, some glutamate residues at the C-terminus are polyglutamylated, resulting in polyglutamate chains on the gamma-carboxyl group. Polyglutamylation plays a key role in microtubule severing by spastin (SPAST). SPAST preferentially recognizes and acts on microtubules decorated with short polyglutamate tails: severing activity by SPAST increases as the number of glutamates per tubulin rises from one to eight, but decreases beyond this glutamylation threshold.

The protein resides in the cytoplasm. It localises to the cytoskeleton. In terms of biological role, tubulin is the major constituent of microtubules, a cylinder consisting of laterally associated linear protofilaments composed of alpha- and beta-tubulin heterodimers. Microtubules grow by the addition of GTP-tubulin dimers to the microtubule end, where a stabilizing cap forms. Below the cap, tubulin dimers are in GDP-bound state, owing to GTPase activity of alpha-tubulin. The chain is Tubulin beta-1 chain from Gadus morhua (Atlantic cod).